Consider the following 599-residue polypeptide: Elongation factor 4 (599 aa).

A tr-type G domain is found at A5–K187. GTP-binding positions include D17–T22 and N134–D137.

Belongs to the TRAFAC class translation factor GTPase superfamily. Classic translation factor GTPase family. LepA subfamily.

The protein resides in the cell inner membrane. The catalysed reaction is GTP + H2O = GDP + phosphate + H(+). Required for accurate and efficient protein synthesis under certain stress conditions. May act as a fidelity factor of the translation reaction, by catalyzing a one-codon backward translocation of tRNAs on improperly translocated ribosomes. Back-translocation proceeds from a post-translocation (POST) complex to a pre-translocation (PRE) complex, thus giving elongation factor G a second chance to translocate the tRNAs correctly. Binds to ribosomes in a GTP-dependent manner. This Ruegeria pomeroyi (strain ATCC 700808 / DSM 15171 / DSS-3) (Silicibacter pomeroyi) protein is Elongation factor 4.